The chain runs to 552 residues: Oxygen-dependent choline dehydrogenase (552 aa).

7 to 36 (DYIIIGAGSAGNVLAARLTEDKDTTVLLLE) contacts FAD. The Proton acceptor role is filled by H477.

Belongs to the GMC oxidoreductase family. FAD serves as cofactor.

The enzyme catalyses choline + A = betaine aldehyde + AH2. It catalyses the reaction betaine aldehyde + NAD(+) + H2O = glycine betaine + NADH + 2 H(+). It participates in amine and polyamine biosynthesis; betaine biosynthesis via choline pathway; betaine aldehyde from choline (cytochrome c reductase route): step 1/1. Involved in the biosynthesis of the osmoprotectant glycine betaine. Catalyzes the oxidation of choline to betaine aldehyde and betaine aldehyde to glycine betaine at the same rate. The protein is Oxygen-dependent choline dehydrogenase of Acinetobacter baumannii (strain AB307-0294).